The following is a 438-amino-acid chain: Glutamyl-tRNA reductase (438 aa).

Substrate-binding positions include 49 to 52 (TCNR), serine 109, 114 to 116 (EGQ), and glutamine 120. Residue cysteine 50 is the Nucleophile of the active site. 197–202 (GAGKMS) contacts NADP(+).

It belongs to the glutamyl-tRNA reductase family. In terms of assembly, homodimer.

It carries out the reaction (S)-4-amino-5-oxopentanoate + tRNA(Glu) + NADP(+) = L-glutamyl-tRNA(Glu) + NADPH + H(+). It participates in porphyrin-containing compound metabolism; protoporphyrin-IX biosynthesis; 5-aminolevulinate from L-glutamyl-tRNA(Glu): step 1/2. It functions in the pathway porphyrin-containing compound metabolism; chlorophyll biosynthesis. In terms of biological role, catalyzes the NADPH-dependent reduction of glutamyl-tRNA(Glu) to glutamate 1-semialdehyde (GSA). The sequence is that of Glutamyl-tRNA reductase from Synechococcus elongatus (strain ATCC 33912 / PCC 7942 / FACHB-805) (Anacystis nidulans R2).